Consider the following 353-residue polypeptide: Probable WRKY transcription factor 7 (353 aa).

The disordered stretch occupies residues 117–259 (VEEKKPETSS…SSRCHCSKKR (143 aa)). The span at 158-176 (SHNNNNNQNQTKNGSSSSS) shows a compositional bias: low complexity. 2 stretches are compositionally biased toward polar residues: residues 184–204 (APSTINFAPSPPVSATNSFMS) and 213–229 (THMSSGFEFTNPSQLSG). The WRKY DNA-binding region spans 275-341 (KMADIPSDEF…YEGDHNHALV (67 aa)).

The protein belongs to the WRKY group II-d family. In terms of tissue distribution, in young, mature and senescent leaves.

The protein resides in the nucleus. In terms of biological role, transcription factor. Interacts specifically with the W box (5'-(T)TGAC[CT]-3'), a frequently occurring elicitor-responsive cis-acting element. This is Probable WRKY transcription factor 7 (WRKY7) from Arabidopsis thaliana (Mouse-ear cress).